Consider the following 131-residue polypeptide: MKKHGILNSHIAKLLADLGHTDTIVIADAGLPVPPGVPKIDLALTLGTPGFREVTKLIADEMVVEKVTAAQEIESVNPGQAAFLKAEFSNQKIDYIPHEAFKKATSQAKAVIRTGEATPYANCILHAGVIF.

The Proton donor role is filled by histidine 20. Residues aspartate 28, histidine 98, and 120 to 122 contribute to the substrate site; that span reads YAN.

The protein belongs to the RbsD / FucU family. RbsD subfamily. In terms of assembly, homodecamer.

Its subcellular location is the cytoplasm. The enzyme catalyses beta-D-ribopyranose = beta-D-ribofuranose. It participates in carbohydrate metabolism; D-ribose degradation; D-ribose 5-phosphate from beta-D-ribopyranose: step 1/2. Its function is as follows. Catalyzes the interconversion of beta-pyran and beta-furan forms of D-ribose. The polypeptide is D-ribose pyranase (Bacillus licheniformis (strain ATCC 14580 / DSM 13 / JCM 2505 / CCUG 7422 / NBRC 12200 / NCIMB 9375 / NCTC 10341 / NRRL NRS-1264 / Gibson 46)).